Consider the following 176-residue polypeptide: Large ribosomal subunit protein eL20A (176 aa).

Belongs to the eukaryotic ribosomal protein eL20 family. In terms of assembly, component of the large ribosomal subunit (LSU). Mature yeast ribosomes consist of a small (40S) and a large (60S) subunit. The 40S small subunit contains 1 molecule of ribosomal RNA (18S rRNA) and at least 33 different proteins. The large 60S subunit contains 3 rRNA molecules (25S, 5.8S and 5S rRNA) and at least 46 different proteins. eL20 forms multiple interactions with RNA and proteins in the central protuberance, connecting components of core functional centers that are located far apart.

Its subcellular location is the cytoplasm. Functionally, component of the ribosome, a large ribonucleoprotein complex responsible for the synthesis of proteins in the cell. The small ribosomal subunit (SSU) binds messenger RNAs (mRNAs) and translates the encoded message by selecting cognate aminoacyl-transfer RNA (tRNA) molecules. The large subunit (LSU) contains the ribosomal catalytic site termed the peptidyl transferase center (PTC), which catalyzes the formation of peptide bonds, thereby polymerizing the amino acids delivered by tRNAs into a polypeptide chain. The nascent polypeptides leave the ribosome through a tunnel in the LSU and interact with protein factors that function in enzymatic processing, targeting, and the membrane insertion of nascent chains at the exit of the ribosomal tunnel. The chain is Large ribosomal subunit protein eL20A (rpl2001) from Schizosaccharomyces pombe (strain 972 / ATCC 24843) (Fission yeast).